The sequence spans 465 residues: Serine/threonine-protein kinase 38 (465 aa).

Position 2 is an N-acetylalanine (alanine 2). An interaction with S100B region spans residues 62–87; that stretch reads KRLRRSAHARKETEFLRLKRTRLGLE. Position 74 is a phosphothreonine (threonine 74). In terms of domain architecture, Protein kinase spans 89-382; it reads FESLKVIGRG…VEEIKSNSFF (294 aa). ATP-binding positions include 95-103 and lysine 118; that span reads IGRGAFGEV. Aspartate 212 functions as the Proton acceptor in the catalytic mechanism. Residue serine 264 is modified to Phosphoserine. Serine 281 bears the Phosphoserine; by autocatalysis mark. The UFM1-interacting motif (UFIM) motif lies at 306-311; sequence WSLGVI. The region spanning 383–455 is the AGC-kinase C-terminal domain; it reads EGVDWEHIRE…KRFEGLTARG (73 aa). The residue at position 444 (threonine 444) is a Phosphothreonine; by STK24/MST3.

The protein belongs to the protein kinase superfamily. AGC Ser/Thr protein kinase family. In terms of assembly, homodimeric S100B binds two molecules of STK38. Interacts with MOB1 and MOB2. Interacts with MAP3K1 and MAP3K2 (via the kinase catalytic domain). Forms a tripartite complex with MOBKL1B and STK3/MST2. Interacts with MICAL1; leading to inhibit the protein kinase activity by antagonizing activation by MST1/STK4. Mg(2+) serves as cofactor. ISGylated. In terms of processing, phosphorylated by STK3/MST2 and this is enhanced by MOBKL1B. As to expression, ubiquitously expressed with highest levels observed in peripheral blood leukocytes.

Its subcellular location is the nucleus. The protein localises to the cytoplasm. It is found in the chromosome. It catalyses the reaction L-seryl-[protein] + ATP = O-phospho-L-seryl-[protein] + ADP + H(+). The catalysed reaction is L-threonyl-[protein] + ATP = O-phospho-L-threonyl-[protein] + ADP + H(+). Its activity is regulated as follows. Activated by binding of S100B which releases autoinhibitory N-lobe interactions, enabling ATP to bind and the autophosphorylation of Ser-281. Thr-444 then undergoes calcium-dependent phosphorylation by STK24/MST3. Interactions between phosphorylated Thr-444 and the N-lobe promote additional structural changes that complete the activation of the kinase. Autoinhibition is also released by the binding of MOB1/MOBKL1A and MOB2/HCCA2 to the N-terminal of STK38. Its function is as follows. Serine/threonine-protein kinase that acts as a negative regulator of MAP3K1/2 signaling. Converts MAP3K2 from its phosphorylated form to its non-phosphorylated form and inhibits autophosphorylation of MAP3K2. Acts as an ufmylation 'reader' in a kinase-independent manner: specifically recognizes and binds mono-ufmylated histone H4 in response to DNA damage, promoting the recruitment of SUV39H1 to the double-strand breaks, resulting in ATM activation. The polypeptide is Serine/threonine-protein kinase 38 (Homo sapiens (Human)).